Here is a 104-residue protein sequence, read N- to C-terminus: Integration host factor subunit alpha (104 aa).

This sequence belongs to the bacterial histone-like protein family. As to quaternary structure, heterodimer of an alpha and a beta chain.

Functionally, this protein is one of the two subunits of integration host factor, a specific DNA-binding protein that functions in genetic recombination as well as in transcriptional and translational control. This Buchnera aphidicola subsp. Cinara cedri (strain Cc) protein is Integration host factor subunit alpha.